We begin with the raw amino-acid sequence, 215 residues long: Protein-L-isoaspartate O-methyltransferase (215 aa).

Ser-62 is a catalytic residue.

The protein belongs to the methyltransferase superfamily. L-isoaspartyl/D-aspartyl protein methyltransferase family.

The protein localises to the cytoplasm. It catalyses the reaction [protein]-L-isoaspartate + S-adenosyl-L-methionine = [protein]-L-isoaspartate alpha-methyl ester + S-adenosyl-L-homocysteine. In terms of biological role, catalyzes the methyl esterification of L-isoaspartyl residues in peptides and proteins that result from spontaneous decomposition of normal L-aspartyl and L-asparaginyl residues. It plays a role in the repair and/or degradation of damaged proteins. The polypeptide is Protein-L-isoaspartate O-methyltransferase (Ruegeria sp. (strain TM1040) (Silicibacter sp.)).